The primary structure comprises 230 residues: MQTSFVALLAVAASLASALPHGGNSYEASLPEPTNLPEPTKLPEPVEGPYKPKPPILPEPIKDNYKPKTPILPEHVEGPYKPKLPEPTTGDPKNNTLPVPTCVDGKIKTHKVKSGESLTTIAEKYDTGICNIAKLNNLADPNFVDLNQDLQIPTDACEKDNTSCIKPDGTATCVKDGKKDGKDIYSVVSGDTLTSIAQALQITLQSLKDANPGVVPEHLNVGQKLNVPVC.

An N-terminal signal peptide occupies residues 1–18; the sequence is MQTSFVALLAVAASLASA. Residues 20–102 form a disordered region; the sequence is PHGGNSYEAS…KNNTLPVPTC (83 aa). 10 tandem repeats follow at residues 30-33, 36-39, 42-45, 46-49, 50-53, 57-60, 65-68, 76-79, 80-83, and 84-87. Positions 30–87 are 5 X 4 AA repeats of L-P-E-P; it reads LPEPTNLPEPTKLPEPVEGPYKPKPPILPEPIKDNYKPKTPILPEHVEGPYKPKLPEP. A 2 X 4 AA repeats of V-E-G-P region spans residues 46-87; the sequence is VEGPYKPKPPILPEPIKDNYKPKTPILPEHVEGPYKPKLPEP. The interval 50–83 is 3 X 4 AA repeats of Y-K-P-K; sequence YKPKPPILPEPIKDNYKPKTPILPEHVEGPYKPK. The span at 74 to 84 shows a compositional bias: basic and acidic residues; the sequence is EHVEGPYKPKL. Asn-94 carries N-linked (GlcNAc...) asparagine glycosylation. The LysM 1 domain maps to 108-152; sequence KTHKVKSGESLTTIAEKYDTGICNIAKLNNLADPNFVDLNQDLQI. Asn-161 is a glycosylation site (N-linked (GlcNAc...) asparagine). One can recognise a LysM 2 domain in the interval 183-227; sequence DIYSVVSGDTLTSIAQALQITLQSLKDANPGVVPEHLNVGQKLNV.

Forms a multimeric structure. N-glycosylated and may be O-glycosylated. In terms of tissue distribution, expressed in penetration hyphae, infection vesicles and primary hyphae (intracellular hyphae).

It is found in the secreted. The protein resides in the cell wall. Functionally, may have roles in host-pathogen interaction, including establishment and maintenance of biotrophy, prevention of host recognition of the fungus and a barrier to host defense molecules. In Colletotrichum lindemuthianum (Bean anthracnose fungus), this protein is Intracellular hyphae protein 1 (CIH1).